We begin with the raw amino-acid sequence, 368 residues long: Endophilin-A2 (368 aa).

Residues 1–21 are membrane-binding amphipathic helix; it reads MSVAGLKKQFYKASQLVSEKV. The 232-residue stretch at 18 to 249 folds into the BAR domain; the sequence is SEKVGGAEGT…LKRRMREASS (232 aa). The required for dimerization upon membrane association stretch occupies residues 60 to 87; it reads PNPASRAKLTMLNTVSKIRGQVKNPGYP. Residues 181 to 250 are a coiled coil; that stretch reads EELRQAMEKF…KRRMREASSR (70 aa). The interaction with ARC stretch occupies residues 218-254; that stretch reads LVDAQLDYHRQAVQILDELADKLKRRMREASSRPKRE. Residues 243 to 308 form a disordered region; that stretch reads RMREASSRPK…PSRSMPPLDQ (66 aa). The segment covering 245 to 263 has biased composition (basic and acidic residues); the sequence is REASSRPKREYKPKPRELL. Residues Ser-288 and Ser-292 each carry the phosphoserine modification. A Phosphothreonine modification is found at Thr-298. An SH3 domain is found at 306-365; sequence LDQPSCKALYDFEPENDGELGFHEGDIITLTNQIDENWYEGMLDGQSGFFPLSYVEVLVP. Tyr-315 is modified (phosphotyrosine).

It belongs to the endophilin family. As to quaternary structure, interacts with ARC, SYNJ1 and DNM1. Interacts with PDCD6IP. Interacts with BIN2.

Its subcellular location is the cytoplasm. It localises to the early endosome membrane. The protein resides in the cell projection. The protein localises to the podosome. Implicated in endocytosis. May recruit other proteins to membranes with high curvature. The chain is Endophilin-A2 from Bos taurus (Bovine).